A 301-amino-acid polypeptide reads, in one-letter code: uncharacterized protein (301 aa).

Positions 146, 148, and 177 each coordinate a divalent metal cation.

The protein belongs to the FAH family.

This is an uncharacterized protein from Staphylococcus saprophyticus subsp. saprophyticus (strain ATCC 15305 / DSM 20229 / NCIMB 8711 / NCTC 7292 / S-41).